The sequence spans 232 residues: Syntaxin-51 (232 aa).

The Cytoplasmic segment spans residues 1 to 208; it reads MASSSDSWMR…NKNMRSGCSC (208 aa). The region spanning 136–198 is the t-SNARE coiled-coil homology domain; the sequence is RQVMREQDEG…RRVQKSLAVM (63 aa). A helical; Anchor for type IV membrane protein transmembrane segment spans residues 209–229; that stretch reads MSMLLSVLGIVGLAVVIWMLV. At 230 to 232 the chain is on the vesicular side; that stretch reads KYM.

This sequence belongs to the syntaxin family. In terms of assembly, interacts with VTI11 and either SYP21, or SYP22, or SYP61 in the prevacuolar compartment, or with VTI12 and SYP61 in the trans-Golgi network to form t-SNARE complexes. Expressed in root, leaf, stem, flower and silique.

Its subcellular location is the golgi apparatus. The protein localises to the trans-Golgi network membrane. It is found in the prevacuolar compartment membrane. Functionally, vesicle trafficking protein that functions in the secretory pathway. The chain is Syntaxin-51 (SYP51) from Arabidopsis thaliana (Mouse-ear cress).